A 78-amino-acid polypeptide reads, in one-letter code: Conotoxin CaFr179 (78 aa).

The first 19 residues, 1-19 (MSGLGIMVLTLLLLVFMEA), serve as a signal peptide directing secretion. The propeptide occupies 20–44 (SHQDAGEKQATQRDAINVRRRRSLA). 3 cysteine pairs are disulfide-bonded: Cys-52–Cys-64, Cys-56–Cys-72, and Cys-63–Cys-76. Phe-77 bears the Phenylalanine amide mark.

The protein belongs to the conotoxin O3 superfamily. As to expression, expressed by the venom duct.

It localises to the secreted. The chain is Conotoxin CaFr179 from Conus caracteristicus (Characteristic cone).